The primary structure comprises 665 residues: Long chain acyl-CoA synthetase 3 (665 aa).

228-239 lines the ATP pocket; the sequence is IMYTSGTTGDPK. Residues 495–519 form a fatty acid-binding region; that stretch reads DGWLHTGDVGEWQPDGAMKIIDRKK.

This sequence belongs to the ATP-dependent AMP-binding enzyme family. Requires Mg(2+) as cofactor.

It carries out the reaction a long-chain fatty acid + ATP + CoA = a long-chain fatty acyl-CoA + AMP + diphosphate. Its pathway is lipid metabolism; fatty acid metabolism. Its function is as follows. Activation of long-chain fatty acids for both synthesis of cellular lipids, and degradation via beta-oxidation. Preferentially uses palmitate, palmitoleate, oleate and linoleate. The sequence is that of Long chain acyl-CoA synthetase 3 (LACS3) from Arabidopsis thaliana (Mouse-ear cress).